The chain runs to 337 residues: Ribosomal RNA small subunit methyltransferase H (337 aa).

Residues 35–37 (GGY), aspartate 54, phenylalanine 81, aspartate 102, and glutamine 109 contribute to the S-adenosyl-L-methionine site. The disordered stretch occupies residues 286-316 (PVGPSEAEAAANPRARSAKLRAGERTDAPAP). A compositionally biased stretch (low complexity) spans 289–300 (PSEAEAAANPRA).

It belongs to the methyltransferase superfamily. RsmH family.

Its subcellular location is the cytoplasm. The enzyme catalyses cytidine(1402) in 16S rRNA + S-adenosyl-L-methionine = N(4)-methylcytidine(1402) in 16S rRNA + S-adenosyl-L-homocysteine + H(+). Functionally, specifically methylates the N4 position of cytidine in position 1402 (C1402) of 16S rRNA. In Methylobacterium sp. (strain 4-46), this protein is Ribosomal RNA small subunit methyltransferase H.